Here is a 748-residue protein sequence, read N- to C-terminus: Junctophilin-3 (748 aa).

Residues 1-727 (MSSGGRFNFD…LKSSTGSAPI (727 aa)) are Cytoplasmic-facing. MORN repeat units follow at residues 15–37 (YCGG…KGQG), 39–60 (YTGS…SGNT), 61–82 (YQGT…GKWV), 83–105 (YKGE…GNGA), 107–129 (YEGT…DGGT), and 130–152 (YQGQ…PYGM). A disordered region spans residues 230-259 (SKSSLASQRSKQSSFRSEAGMSTVSSTASD). Low complexity predominate over residues 231 to 244 (KSSLASQRSKQSSF). A compositionally biased stretch (polar residues) spans 249 to 259 (GMSTVSSTASD). 2 MORN repeats span residues 288 to 310 (YVGE…DGLK) and 311 to 333 (YEGE…DGTK). A disordered region spans residues 416–496 (AKEFSPSFQH…TPPPAPAARN (81 aa)). Ser-440 carries the post-translational modification Phosphoserine. Polar residues predominate over residues 448 to 457 (STGTPLQQES). At Thr-451 the chain carries Phosphothreonine. Ser-457 bears the Phosphoserine mark. Residue Thr-471 is modified to Phosphothreonine. 2 positions are modified to phosphoserine: Ser-475 and Ser-506. Disordered regions lie at residues 526 to 597 (CARS…SPGG) and 624 to 649 (HPQK…EDRG). The segment covering 639-649 (LGDDHRPEDRG) has biased composition (basic and acidic residues). Phosphoserine is present on residues Ser-703 and Ser-710. Residues 728–748 (LVVMVILLNIGVAILFINFFI) traverse the membrane as a helical; Anchor for type IV membrane protein segment.

It belongs to the junctophilin family. As to expression, specifically expressed in brain.

The protein resides in the cell membrane. It localises to the endoplasmic reticulum membrane. Functionally, junctophilins contribute to the formation of junctional membrane complexes (JMCs) which link the plasma membrane with the endoplasmic or sarcoplasmic reticulum in excitable cells. Provides a structural foundation for functional cross-talk between the cell surface and intracellular calcium release channels. JPH3 is brain-specific and appears to have an active role in certain neurons involved in motor coordination and memory. The protein is Junctophilin-3 (JPH3) of Homo sapiens (Human).